A 95-amino-acid chain; its full sequence is Small ribosomal subunit protein bS18 (95 aa).

The protein belongs to the bacterial ribosomal protein bS18 family. Part of the 30S ribosomal subunit. Forms a tight heterodimer with protein bS6.

In terms of biological role, binds as a heterodimer with protein bS6 to the central domain of the 16S rRNA, where it helps stabilize the platform of the 30S subunit. The protein is Small ribosomal subunit protein bS18 of Ehrlichia canis (strain Jake).